A 484-amino-acid polypeptide reads, in one-letter code: UDP-N-acetylmuramate--L-alanine ligase (484 aa).

ATP is bound at residue 127–133 (GTHGKTT).

It belongs to the MurCDEF family.

It is found in the cytoplasm. The enzyme catalyses UDP-N-acetyl-alpha-D-muramate + L-alanine + ATP = UDP-N-acetyl-alpha-D-muramoyl-L-alanine + ADP + phosphate + H(+). The protein operates within cell wall biogenesis; peptidoglycan biosynthesis. Functionally, cell wall formation. The sequence is that of UDP-N-acetylmuramate--L-alanine ligase from Shewanella amazonensis (strain ATCC BAA-1098 / SB2B).